The chain runs to 142 residues: Small ribosomal subunit protein bS6 (142 aa).

Basic and acidic residues predominate over residues 110–133; the sequence is NKKPSHAKEKHEKTEHTHSHHLEE. Residues 110-142 are disordered; it reads NKKPSHAKEKHEKTEHTHSHHLEEAESVGSHSE.

Belongs to the bacterial ribosomal protein bS6 family.

In terms of biological role, binds together with bS18 to 16S ribosomal RNA. In Helicobacter pylori (strain HPAG1), this protein is Small ribosomal subunit protein bS6.